Reading from the N-terminus, the 234-residue chain is Sugar fermentation stimulation protein A (234 aa).

Residues 201–220 (LLSEAQNKGVEVLAYKAELS) constitute a DNA-binding region (H-T-H motif).

Belongs to the SfsA family.

In terms of biological role, binds to DNA non-specifically. Could be a regulatory factor involved in maltose metabolism. This Salmonella choleraesuis (strain SC-B67) protein is Sugar fermentation stimulation protein A.